The chain runs to 220 residues: Superoxide dismutase [Fe] (220 aa).

Fe cation-binding residues include His-26, His-73, Asp-164, and His-168.

This sequence belongs to the iron/manganese superoxide dismutase family. As to quaternary structure, homodimer. The cofactor is Fe cation.

The catalysed reaction is 2 superoxide + 2 H(+) = H2O2 + O2. Functionally, destroys superoxide anion radicals which are normally produced within the cells and which are toxic to biological systems. This is Superoxide dismutase [Fe] (sodB) from Campylobacter jejuni subsp. jejuni serotype O:2 (strain ATCC 700819 / NCTC 11168).